The sequence spans 1139 residues: DNA-directed RNA polymerase subunit beta (1139 aa).

Residues 1085 to 1139 (ADTSNRHTPSRPTYESVTSEDLSPSPAFTRVLRTADANASRSLEEDEDEEEEEDF) are disordered. Polar residues predominate over residues 1086 to 1106 (DTSNRHTPSRPTYESVTSEDL). Acidic residues predominate over residues 1128-1139 (EEDEDEEEEEDF).

It belongs to the RNA polymerase beta chain family. In terms of assembly, in cyanobacteria the RNAP catalytic core is composed of 2 alpha, 1 beta, 1 beta', 1 gamma and 1 omega subunit. When a sigma factor is associated with the core the holoenzyme is formed, which can initiate transcription.

The enzyme catalyses RNA(n) + a ribonucleoside 5'-triphosphate = RNA(n+1) + diphosphate. Functionally, DNA-dependent RNA polymerase catalyzes the transcription of DNA into RNA using the four ribonucleoside triphosphates as substrates. The polypeptide is DNA-directed RNA polymerase subunit beta (Synechococcus sp. (strain JA-2-3B'a(2-13)) (Cyanobacteria bacterium Yellowstone B-Prime)).